A 323-amino-acid chain; its full sequence is Beta-ketoacyl-[acyl-carrier-protein] synthase III (323 aa).

Residues cysteine 113 and histidine 250 contribute to the active site. Positions 251 to 255 (QANKR) are ACP-binding. The active site involves asparagine 280.

Belongs to the thiolase-like superfamily. FabH family. As to quaternary structure, homodimer.

The protein resides in the cytoplasm. It carries out the reaction malonyl-[ACP] + acetyl-CoA + H(+) = 3-oxobutanoyl-[ACP] + CO2 + CoA. The protein operates within lipid metabolism; fatty acid biosynthesis. Its function is as follows. Catalyzes the condensation reaction of fatty acid synthesis by the addition to an acyl acceptor of two carbons from malonyl-ACP. Catalyzes the first condensation reaction which initiates fatty acid synthesis and may therefore play a role in governing the total rate of fatty acid production. Possesses both acetoacetyl-ACP synthase and acetyl transacylase activities. Its substrate specificity determines the biosynthesis of branched-chain and/or straight-chain of fatty acids. The protein is Beta-ketoacyl-[acyl-carrier-protein] synthase III of Brucella anthropi (strain ATCC 49188 / DSM 6882 / CCUG 24695 / JCM 21032 / LMG 3331 / NBRC 15819 / NCTC 12168 / Alc 37) (Ochrobactrum anthropi).